The primary structure comprises 106 residues: Cytochrome c oxidase assembly factor 3 homolog, mitochondrial (106 aa).

Residues 1–28 form a disordered region; that stretch reads MASSGSGDPLDSKRGEAPFAQRIDPTRE. A2 is modified (N-acetylalanine). At 2 to 57 the chain is on the mitochondrial matrix side; sequence ASSGSGDPLDSKRGEAPFAQRIDPTREKLTPEQLHFMRQAQLAQWQKVLPRRRTRN. A helical transmembrane segment spans residues 58–80; sequence IVTGLGIGALVLAIHGYTFYSIS. Residues 78–104 adopt a coiled-coil conformation; that stretch reads SISQERFLDELEDEAKAARARALARAS. Over 81–106 the chain is Mitochondrial intermembrane; it reads QERFLDELEDEAKAARARALARASGS.

This sequence belongs to the COA3 family. As to quaternary structure, along with COX14, core component of the MITRAC (mitochondrial translation regulation assembly intermediate of cytochrome c oxidase complex) complex. Interacts with MT-CO1/COX1, SMIM20, SURF1 and TIMM21.

It is found in the mitochondrion inner membrane. In terms of biological role, core component of the MITRAC (mitochondrial translation regulation assembly intermediate of cytochrome c oxidase complex) complex, that regulates cytochrome c oxidase assembly. MITRAC complexes regulate both translation of mitochondrial encoded components and assembly of nuclear-encoded components imported in mitochondrion. Required for efficient translation of MT-CO1 and mitochondrial respiratory chain complex IV assembly. The protein is Cytochrome c oxidase assembly factor 3 homolog, mitochondrial (COA3) of Pongo abelii (Sumatran orangutan).